A 205-amino-acid polypeptide reads, in one-letter code: uncharacterized protein (205 aa).

The region spanning 11 to 71 (DKRQAEILEA…RIIETGLDEG (61 aa)) is the HTH tetR-type domain. A DNA-binding region (H-T-H motif) is located at residues 34-53 (TMKDVVEESGFSRGGVYLYF).

This is an uncharacterized protein from Bacillus subtilis (strain 168).